The chain runs to 199 residues: Large ribosomal subunit protein mL51 (199 aa).

The N-terminal 15 residues, 1-15, are a transit peptide targeting the mitochondrion; that stretch reads MNSNSLSRFTSIVRT.

Belongs to the mitochondrion-specific ribosomal protein mL51 family. In terms of assembly, component of the mitochondrial ribosome large subunit (39S) which comprises a 16S rRNA and about 50 distinct proteins.

It is found in the mitochondrion. This Caenorhabditis elegans protein is Large ribosomal subunit protein mL51 (mrpl-51).